Reading from the N-terminus, the 1224-residue chain is ATP-dependent helicase/deoxyribonuclease subunit B (1224 aa).

Residues 1–326 enclose the UvrD-like helicase ATP-binding domain; that stretch reads MSLRFILGRA…VCAAANRRSE (326 aa). An ATP-binding site is contributed by 8–15; sequence GRAGTGKS. Residues 283-584 form the UvrD-like helicase C-terminal domain; it reads QSAPRFQHPE…KLSLIPPELD (302 aa). Residues Cys841, Cys1176, Cys1179, and Cys1185 each coordinate [4Fe-4S] cluster.

This sequence belongs to the helicase family. AddB/RexB type 1 subfamily. As to quaternary structure, heterodimer of AddA and AddB. It depends on Mg(2+) as a cofactor. The cofactor is [4Fe-4S] cluster.

Its function is as follows. The heterodimer acts as both an ATP-dependent DNA helicase and an ATP-dependent, dual-direction single-stranded exonuclease. Recognizes the chi site generating a DNA molecule suitable for the initiation of homologous recombination. The AddB subunit has 5' -&gt; 3' nuclease activity but not helicase activity. The protein is ATP-dependent helicase/deoxyribonuclease subunit B of Heliobacterium modesticaldum (strain ATCC 51547 / Ice1).